The following is a 156-amino-acid chain: 17.4 kDa class I heat shock protein (156 aa).

The 115-residue stretch at 42-156 (DVAAFTNAKV…PEVKSVDISG (115 aa)) folds into the sHSP domain.

This sequence belongs to the small heat shock protein (HSP20) family. May form oligomeric structures. Binds to AKR2A.

The protein localises to the cytoplasm. This is 17.4 kDa class I heat shock protein (HSP17.4A) from Arabidopsis thaliana (Mouse-ear cress).